The primary structure comprises 362 residues: Serine/threonine-protein kinase SRK2E (362 aa).

Phosphoserine; by autocatalysis occurs at positions 7, 18, 29, and 43. A Protein kinase domain is found at 21–277 (YELVKDIGSG…IPEIRNHEWF (257 aa)). Position 27 to 35 (27 to 35 (IGSGNFGVA)) interacts with ATP. Lysine 50 is an ATP binding site. The active-site Proton acceptor is aspartate 140. Positions 160–186 (DFGYSKSSVLHSQPKSTVGTPAYIAPE) are activation loop. Serine 175 is subject to Phosphoserine. Residues 283–318 (ADLMNDNTMTTQFDESDQPGQSIEEIMQIIAEATVP) form a domain I; osmotic stress response, required for the kinase activity region. Positions 319–362 (PAGTQNLNHYLTGSLDIDDDMEEDLESDLDDLDIDSSGEIVYAM) are domain II; ABA response and ABI1 binding.

This sequence belongs to the protein kinase superfamily. Ser/Thr protein kinase family. As to quaternary structure, interacts with ABI1, PP2CA and SLAC1. Interacts with B'ALPHA, B'BETA, B'DELTA, PP2AA2, PP2AA3, PP2A1 and PP2A2. Associates with MAPKKK18 within the nucleus. Interacts with I-2, TOPP1 and TOPP2. Interacts with ABI2. In terms of processing, autophosphorylation on residues Ser-7, Ser-18, Ser-29, Ser-43, Ser-175 and/or Thr-176. Only the phosphorylation of Ser-175 is crucial for the kinase activity. The phosphorylation of Ser-43 may repress the ABA signaling pathway in absence of ABA. In terms of tissue distribution, expressed in seedlings, leaves, flowers, stems, and roots, but restricted to guard cells and vascular tissue.

It localises to the nucleus. The enzyme catalyses L-seryl-[protein] + ATP = O-phospho-L-seryl-[protein] + ADP + H(+). It catalyses the reaction L-threonyl-[protein] + ATP = O-phospho-L-threonyl-[protein] + ADP + H(+). Its activity is regulated as follows. Kinase activity enhanced by ABA and low humidity. Repressed by PP2CA independently of its phosphatase activity. Probably inactivated by ABI1. Repressed by TOPP1. Negatively regulated by ABI2. Its function is as follows. Activator of the abscisic acid (ABA) signaling pathway that regulates numerous ABA responses, such as stomata closure in response to drought, darkness, high CO(2), plant pathogens, or decreases in atmospheric relative humidity (RH). Involved in the resistance to drought by avoiding water loss. Required for the stomata closure mediated by pathogen-associated molecular pattern (PAMPs) (e.g. flg22 and LPS) of pathogenic bacteria such as P.syringae pv. tomato (Pst) and E.coli O157:H7. As a plant defense process, stomata are closed transiently in order to limit invaders, but actively reopened by bacteria after a few hours; virulent strains (e.g. Pst DC3000) are more efficient than avirulent strains (e.g. Pst DC3000 AvrRpt2) in reopening stomata. Mediates the phosphorylation and activation of the S-type anion efflux channel SLAC1, and thus promotes stomata closure. Essential for stomatal closure in response to reactive oxygen species (ROS). Promotes MAPKKK18 activity upon abscisic acid (ABA) treatment. This chain is Serine/threonine-protein kinase SRK2E, found in Arabidopsis thaliana (Mouse-ear cress).